The chain runs to 926 residues: Bifunctional uridylyltransferase/uridylyl-removing enzyme (926 aa).

A uridylyltransferase region spans residues 1 to 379 (MPVSFLSLAS…PKSRRSGASK (379 aa)). Residues 380–736 (QIDGFPVIQG…GHEMPAYDAT (357 aa)) form a uridylyl-removing region. The HD domain occupies 496 to 618 (VDEHAIRALD…VKSPERLRLL (123 aa)). 2 consecutive ACT domains span residues 737–814 (MISL…IRSS) and 849–926 (VIEV…ISEK).

It belongs to the GlnD family. It depends on Mg(2+) as a cofactor.

It carries out the reaction [protein-PII]-L-tyrosine + UTP = [protein-PII]-uridylyl-L-tyrosine + diphosphate. The catalysed reaction is [protein-PII]-uridylyl-L-tyrosine + H2O = [protein-PII]-L-tyrosine + UMP + H(+). Its activity is regulated as follows. Uridylyltransferase (UTase) activity is inhibited by glutamine, while glutamine activates uridylyl-removing (UR) activity. Modifies, by uridylylation and deuridylylation, the PII regulatory proteins (GlnB and homologs), in response to the nitrogen status of the cell that GlnD senses through the glutamine level. Under low glutamine levels, catalyzes the conversion of the PII proteins and UTP to PII-UMP and PPi, while under higher glutamine levels, GlnD hydrolyzes PII-UMP to PII and UMP (deuridylylation). Thus, controls uridylylation state and activity of the PII proteins, and plays an important role in the regulation of nitrogen assimilation and metabolism. This Zymomonas mobilis subsp. mobilis (strain ATCC 31821 / ZM4 / CP4) protein is Bifunctional uridylyltransferase/uridylyl-removing enzyme.